The sequence spans 398 residues: Fructose-bisphosphate aldolase 2, chloroplastic (398 aa).

The N-terminal 46 residues, 1 to 46, are a transit peptide targeting the chloroplast; the sequence is MASTSLLKASPVLDKSEWVKGQSVLFRQPSSASVVLRNRATSLTVR. Arg-95 contacts substrate. Ser-157 is modified (phosphoserine). Substrate is bound at residue Lys-185. Ser-215 carries the phosphoserine modification. Glu-225 (proton acceptor) is an active-site residue. Catalysis depends on Lys-267, which acts as the Schiff-base intermediate with dihydroxyacetone-P. Substrate is bound at residue 309-311; the sequence is SGG. At Lys-394 the chain carries N6,N6,N6-trimethyllysine.

The protein belongs to the class I fructose-bisphosphate aldolase family. As to quaternary structure, homotetramer. Can be trimethylated at Lys-394 by LSMT-L. The methylation level has no influence on the ologomerization state or on the kinetic properties of the enzyme. Post-translationally, phosphorylated on tyrosine residues in response to abscisic acid (ABA) in germinating seeds. As to expression, highly expressed in rosettes leaves.

Its subcellular location is the plastid. The protein resides in the chloroplast. The protein localises to the plastoglobule. It localises to the chloroplast stroma. The catalysed reaction is beta-D-fructose 1,6-bisphosphate = D-glyceraldehyde 3-phosphate + dihydroxyacetone phosphate. The protein operates within carbohydrate degradation; glycolysis; D-glyceraldehyde 3-phosphate and glycerone phosphate from D-glucose: step 4/4. In terms of biological role, plays a key role in glycolysis and gluconeogenesis. The polypeptide is Fructose-bisphosphate aldolase 2, chloroplastic (Arabidopsis thaliana (Mouse-ear cress)).